The primary structure comprises 133 residues: FPRL1 inhibitory protein (133 aa).

Positions 1–28 are cleaved as a signal peptide; it reads MKKNITKTIIASTVIAAGLLTQTNDAKA.

Belongs to the CHIPS/FLIPr family.

It localises to the secreted. In terms of biological role, may be involved in countering the first line of host defense mechanisms. Impairs the leukocyte response to FPRL1 agonists by binding directly to host FPRL1. Exerts, in vitro, anti-inflammatory activity by inhibiting calcium mobilization and cell migration toward chemoattractants. The protein is FPRL1 inhibitory protein (flr) of Staphylococcus aureus (strain Newman).